A 111-amino-acid chain; its full sequence is Aspartate 1-decarboxylase (111 aa).

Catalysis depends on serine 25, which acts as the Schiff-base intermediate with substrate; via pyruvic acid. The residue at position 25 (serine 25) is a Pyruvic acid (Ser). Threonine 57 is a substrate binding site. Catalysis depends on tyrosine 58, which acts as the Proton donor. 73 to 75 (GPA) is a binding site for substrate.

It belongs to the PanD family. Heterooctamer of four alpha and four beta subunits. Pyruvate serves as cofactor. Post-translationally, is synthesized initially as an inactive proenzyme, which is activated by self-cleavage at a specific serine bond to produce a beta-subunit with a hydroxyl group at its C-terminus and an alpha-subunit with a pyruvoyl group at its N-terminus.

Its subcellular location is the cytoplasm. It carries out the reaction L-aspartate + H(+) = beta-alanine + CO2. The protein operates within cofactor biosynthesis; (R)-pantothenate biosynthesis; beta-alanine from L-aspartate: step 1/1. In terms of biological role, catalyzes the pyruvoyl-dependent decarboxylation of aspartate to produce beta-alanine. The chain is Aspartate 1-decarboxylase from Francisella tularensis subsp. novicida (strain U112).